Consider the following 377-residue polypeptide: Transmembrane protein 237A (377 aa).

Composition is skewed to basic and acidic residues over residues 1-11, 43-64, and 74-87; these read MCVTSRADKMP, LESR…DNPP, and HTFE…DHPN. The segment at 1–124 is disordered; the sequence is MCVTSRADKM…NQSHNELGVE (124 aa). The next 4 helical transmembrane spans lie at 198–218, 239–259, 273–293, and 326–346; these read IIGL…IIVV, LAYP…VSAF, GFLT…ALIL, and PWIV…VFVA.

This sequence belongs to the TMEM237 family.

The protein localises to the membrane. It localises to the cell projection. The protein resides in the cilium. In terms of biological role, component of the transition zone in primary cilia. Required for ciliogenesis. The chain is Transmembrane protein 237A (tmem237a) from Danio rerio (Zebrafish).